A 263-amino-acid polypeptide reads, in one-letter code: MAKVNIPIPNDFVKLILISQGHLGGIKTSKLMERYVFGTRKLENIKVIDIEKTWEKFILAARMFCSLKHPSDAVVVSTKTFGRKGVLKFCESTCATPVIGRFIPGTFCNNQVKRPLEPRVLIVSDPFADKQAVIEGSHVNLQTIAFCNTDNDVSFVDIVIPMNNRSPVSISAGLFILSRLIRFMKTGEPLDENMKEVELFIYRDPIELEKLVEEQKIIENANITIGEQELYEQEEFGNKAGWGIEPSLVSTEAVSEFSDNWKN.

It belongs to the universal ribosomal protein uS2 family. In terms of assembly, component of the small ribosomal subunit. Mature ribosomes consist of a small (40S) and a large (60S) subunit. The 40S subunit contains about 33 different proteins and 1 molecule of RNA (18S). The 60S subunit contains about 49 different proteins and 3 molecules of RNA (25S, 5.8S and 5S). Interacts with RPS21.

It is found in the cytoplasm. Its function is as follows. Required for the assembly and/or stability of the 40S ribosomal subunit. Required for the processing of the 20S rRNA-precursor to mature 18S rRNA in a late step of the maturation of 40S ribosomal subunits. The sequence is that of Small ribosomal subunit protein uS2 from Vairimorpha ceranae (strain BRL01) (Microsporidian parasite).